Here is a 269-residue protein sequence, read N- to C-terminus: LOB domain-containing protein 6 (269 aa).

In terms of domain architecture, LOB spans 37-138; that stretch reads SPCAACKFLR…QDLARAKFEL (102 aa).

Belongs to the LOB domain-containing protein family.

The protein resides in the nucleus. In terms of biological role, negative regulator of cell proliferation in the adaxial side of leaves. Regulates the formation of a symmetric lamina and the establishment of venation. The protein is LOB domain-containing protein 6 (LBD6) of Oryza sativa subsp. indica (Rice).